The chain runs to 431 residues: Nuclear receptor subfamily 1 group I member 2 (431 aa).

NR C4-type zinc fingers lie at residues 38 to 58 and 74 to 99; these read CRVCGDKANGYHFNVMTCEGC and CPFRKGTCEITRKTRRQCQACRLRKC. Residues 38 to 104 constitute a DNA-binding region (nuclear receptor); the sequence is CRVCGDKANG…RLRKCLESGM (67 aa). The Bipartite nuclear localization signal signature appears at 63 to 89; that stretch reads RRAMKRNVRLRCPFRKGTCEITRKTRR. The hinge stretch occupies residues 105-142; sequence KKEMIMSDAAVEQRRALIKRKKREKIEAPPPGGQGLTE. In terms of domain architecture, NR LBD spans 143-430; sequence EQQALIQELM…LMQELFSSTD (288 aa). Residues Ser-244 and 282–285 contribute to the hyperforin site; that span reads ILRF.

Belongs to the nuclear hormone receptor family. NR1 subfamily. As to quaternary structure, heterodimer with RXRA. Interacts with NCOA1. Interacts (via domain NR LBD) with CRY1 and CRY2 in a ligand-dependent manner.

The protein resides in the nucleus. Functionally, nuclear receptor that binds and is activated by a variety of endogenous and xenobiotic compounds. Transcription factor that activates the transcription of multiple genes involved in the metabolism and secretion of potentially harmful xenobiotics, endogenous compounds and drugs. Response to specific ligands is species-specific, due to differences in the ligand-binding domain. Activated by naturally occurring steroids, such as pregnenolone and progesterone. Binds to a response element in the promoters of the CYP3A4 and ABCB1/MDR1 genes. This chain is Nuclear receptor subfamily 1 group I member 2 (Nr1i2), found in Rattus norvegicus (Rat).